The primary structure comprises 404 residues: Tripartite motif-containing 13 (404 aa).

The RING-type zinc-finger motif lies at 10-56; sequence CPICCCLFEDPRVLPCSHSFCKKCLEGILDGNRSPTWRPPFKCPTCR. The segment at 87 to 129 adopts a B box-type zinc-finger fold; that stretch reads PRMSQCRVHSGQPLNIFCATDLKLICGFCATTGDHKGHKFCAL. The Zn(2+) site is built by C92, H95, C115, and H121. The helical transmembrane segment at 102–119 threads the bilayer; sequence IFCATDLKLICGFCATTG. The stretch at 186-236 forms a coiled coil; it reads KLLRTLEHKRSEILSDLETLKLAVMQTFDPEINRLRSALEEQRRALNIAES.

The protein resides in the endoplasmic reticulum membrane. The protein operates within protein modification; protein ubiquitination. Functionally, E3 ubiquitin ligase involved in the retrotranslocation and turnover of membrane and secretory proteins from the ER through a set of processes named ER-associated degradation (ERAD). This process acts on misfolded proteins as well as in the regulated degradation of correctly folded proteins. The polypeptide is Tripartite motif-containing 13 (trim13) (Danio rerio (Zebrafish)).